Consider the following 73-residue polypeptide: Gastricsin (73 aa).

Positions 1-43 (SVIKVPLKKLKSIRQAMKEKGLLEEFLKTHKYDPAQRYRIGDI) are cleaved as a propeptide — activation peptide. The 17-residue stretch at 57–73 (YFGEISIGTPPQNFLVL) folds into the Peptidase A1 domain.

The protein belongs to the peptidase A1 family.

Its subcellular location is the secreted. The enzyme catalyses More restricted specificity than pepsin A, but shows preferential cleavage at Tyr-|-Xaa bonds. High activity on hemoglobin.. Functionally, hydrolyzes a variety of proteins. In Sus scrofa (Pig), this protein is Gastricsin (PGC).